A 149-amino-acid polypeptide reads, in one-letter code: Transcriptional repressor NrdR (149 aa).

A zinc finger spans residues 3 to 34 (CPFCSHPETQVVETRVAEDGDFVRRRRQCGAC). The region spanning 49-139 (PNVVKKDGRR…VYRNFEDIDE (91 aa)) is the ATP-cone domain.

It belongs to the NrdR family. Zn(2+) is required as a cofactor.

In terms of biological role, negatively regulates transcription of bacterial ribonucleotide reductase nrd genes and operons by binding to NrdR-boxes. This chain is Transcriptional repressor NrdR, found in Paracidovorax citrulli (strain AAC00-1) (Acidovorax citrulli).